The primary structure comprises 180 residues: GTP cyclohydrolase 1 (180 aa).

The Zn(2+) site is built by Cys-71, His-74, and Cys-142.

It belongs to the GTP cyclohydrolase I family. In terms of assembly, toroid-shaped homodecamer, composed of two pentamers of five dimers.

The enzyme catalyses GTP + H2O = 7,8-dihydroneopterin 3'-triphosphate + formate + H(+). It functions in the pathway cofactor biosynthesis; 7,8-dihydroneopterin triphosphate biosynthesis; 7,8-dihydroneopterin triphosphate from GTP: step 1/1. The polypeptide is GTP cyclohydrolase 1 (folE) (Helicobacter pylori (strain J99 / ATCC 700824) (Campylobacter pylori J99)).